A 144-amino-acid polypeptide reads, in one-letter code: Cysteine desulfuration protein SufE (144 aa).

The Cysteine persulfide intermediate role is filled by Cys51.

The protein belongs to the SufE family. As to quaternary structure, homodimer. Interacts with SufS.

The protein resides in the cytoplasm. It participates in cofactor biosynthesis; iron-sulfur cluster biosynthesis. Its function is as follows. Participates in cysteine desulfuration mediated by SufS. Cysteine desulfuration mobilizes sulfur from L-cysteine to yield L-alanine and constitutes an essential step in sulfur metabolism for biosynthesis of a variety of sulfur-containing biomolecules. Functions as a sulfur acceptor for SufS, by mediating the direct transfer of the sulfur atom from the S-sulfanylcysteine of SufS, an intermediate product of cysteine desulfuration process. The chain is Cysteine desulfuration protein SufE from Wigglesworthia glossinidia brevipalpis.